A 583-amino-acid chain; its full sequence is Probable cysteine--tRNA ligase, mitochondrial (583 aa).

C82 contacts Zn(2+). G83 serves as a coordination point for L-cysteine. Positions 84 to 94 (PTVYSSSHIGH) match the 'HIGH' region motif. An L-cysteine-binding site is contributed by T123. The 'KIIK' region signature appears at 128 to 131 (KIIN). C271, H296, and E300 together coordinate Zn(2+). H296 contributes to the L-cysteine binding site. Positions 337–341 (KMSKS) match the 'KMSKS' region motif. K340 provides a ligand contact to ATP.

The protein belongs to the class-I aminoacyl-tRNA synthetase family. It depends on Zn(2+) as a cofactor.

It localises to the mitochondrion. It carries out the reaction tRNA(Cys) + L-cysteine + ATP = L-cysteinyl-tRNA(Cys) + AMP + diphosphate. In terms of biological role, mitochondrial cysteine-specific aminoacyl-tRNA synthetase that catalyzes the ATP-dependent ligation of cysteine to tRNA(Cys). In addition to its role as an aminoacyl-tRNA synthetase, has also cysteine persulfide synthase activity. Produces reactive persulfide species such as cysteine persulfide (CysSSH) from substrate cysteine and mediate direct incorporation of CysSSH into proteins during translations, resulting in protein persulfides and polysulfides. CysSSHs behave as potent antioxidants and cellular protectants. This chain is Probable cysteine--tRNA ligase, mitochondrial (mcysS), found in Dictyostelium discoideum (Social amoeba).